Consider the following 29-residue polypeptide: Potassium channel toxin alpha-KTx 20.1 (29 aa).

Cystine bridges form between Cys2-Cys20, Cys7-Cys24, and Cys11-Cys26.

Belongs to the short scorpion toxin superfamily. Potassium channel inhibitor family. Alpha-KTx 20 subfamily. As to expression, expressed by the venom gland.

The protein resides in the secreted. Its function is as follows. Reduces potassium currents through Kv1.2/KCNA2 and Kv1.3/KCNA3 voltage-gated potassium channels. This Tityus trivittatus (Argentinean scorpion) protein is Potassium channel toxin alpha-KTx 20.1.